Consider the following 178-residue polypeptide: Caveolin-1 (178 aa).

Position 2 is an N-acetylserine (Ser-2). The residue at position 2 (Ser-2) is a Phosphoserine. The segment at 2 to 94 is required for homooligomerization; the sequence is SGGKYVDSEG…WKASFTTFTV (93 aa). The Cytoplasmic segment spans residues 2 to 104; it reads SGGKYVDSEG…TKYWFYRLLS (103 aa). Residue Lys-5 is modified to N6-acetyllysine; alternate. Residue Lys-5 forms a Glycyl lysine isopeptide (Lys-Gly) (interchain with G-Cter in ubiquitin); alternate linkage. Tyr-6 is modified (phosphotyrosine). Residue Ser-9 is modified to Phosphoserine. Tyr-14 bears the Phosphotyrosine; by ABL1 mark. Position 25 is a phosphotyrosine (Tyr-25). Residues Lys-26, Lys-30, Lys-39, Lys-47, and Lys-57 each participate in a glycyl lysine isopeptide (Lys-Gly) (interchain with G-Cter in ubiquitin) cross-link. Residues 82-94 are interaction with CAVIN3; sequence DGIWKASFTTFTV. An intramembrane region (helical) is located at residues 105–125; it reads ALFGIPMALIWGIYFAILSFL. Residues 126–178 lie on the Cytoplasmic side of the membrane; that stretch reads HIWAVVPCIKSFLIEIQCISRVYSIYVHTFCDPLFEAIGKIFSNIRINMQKEI. An interacts with SPRY1, SPRY2, SPRY3 and SPRY4 region spans residues 131 to 142; that stretch reads VPCIKSFLIEIQ. 3 S-palmitoyl cysteine lipidation sites follow: Cys-133, Cys-143, and Cys-156. The tract at residues 149 to 160 is interacts with SPRY1, SPRY2, and SPRY4; it reads SIYVHTFCDPLF. The interacts with SPRY1, SPRY2, SPRY3 and SPRY4 stretch occupies residues 167 to 178; that stretch reads FSNIRINMQKEI.

It belongs to the caveolin family. In terms of assembly, homooligomer. Interacts with GLIPR2. Interacts with NOSTRIN. Interacts with SNAP25 and STX1A. Interacts (via the N-terminus) with DPP4; the interaction is direct. Interacts with CTNNB1, CDH1 and JUP. Interacts with PACSIN2; this interaction induces membrane tubulation. Interacts with SLC7A9. Interacts with BMX and BTK. Interacts with TGFBR1. Interacts with CAVIN3 (via leucine-zipper domain) in a cholesterol-sensitive manner. Interacts with CAVIN1. Interacts with EHD2 in a cholesterol-dependent manner. Forms a ternary complex with UBXN6 and VCP; mediates CAV1 targeting to lysosomes for degradation. Interacts with ABCG1; this interaction regulates ABCG1-mediated cholesterol efflux. Interacts with NEU3; this interaction enhances NEU3 sialidase activity within caveola. Interacts (via C-terminus) with SPRY1, SPRY2 (via C-terminus), SPRY3, and SPRY4. Interacts with IGFBP5; this interaction allows trafficking of IGFBP5 from the plasma membrane to the nucleus. Phosphorylated at Tyr-14 by ABL1 in response to oxidative stress. In terms of processing, ubiquitinated. Undergo monoubiquitination and multi- and/or polyubiquitination. Monoubiquitination of N-terminal lysines promotes integration in a ternary complex with UBXN6 and VCP which promotes oligomeric CAV1 targeting to lysosomes for degradation. Ubiquitinated by ZNRF1; leading to degradation and modulation of the TLR4-mediated immune response.

It is found in the golgi apparatus membrane. The protein localises to the cell membrane. It localises to the membrane. The protein resides in the caveola. Its subcellular location is the membrane raft. Functionally, may act as a scaffolding protein within caveolar membranes. Forms a stable heterooligomeric complex with CAV2 that targets to lipid rafts and drives caveolae formation. Mediates the recruitment of CAVIN proteins (CAVIN1/2/3/4) to the caveolae. Interacts directly with G-protein alpha subunits and can functionally regulate their activity. Involved in the costimulatory signal essential for T-cell receptor (TCR)-mediated T-cell activation. Its binding to DPP4 induces T-cell proliferation and NF-kappa-B activation in a T-cell receptor/CD3-dependent manner. Recruits CTNNB1 to caveolar membranes and may regulate CTNNB1-mediated signaling through the Wnt pathway. Negatively regulates TGFB1-mediated activation of SMAD2/3 by mediating the internalization of TGFBR1 from membrane rafts leading to its subsequent degradation. Binds 20(S)-hydroxycholesterol (20(S)-OHC). In Muntiacus reevesi (Reeves' muntjac), this protein is Caveolin-1 (CAV1).